The chain runs to 333 residues: NADH dehydrogenase (ubiquinone) complex I, assembly factor 6 (333 aa).

The transit peptide at 1–44 (MATSMLGSVPGPRPFGLAGLFRRRPPRDPWERVRRLPRLSAVRR) directs the protein to the mitochondrion.

Belongs to the NDUFAF6 family.

The protein resides in the mitochondrion inner membrane. Functionally, involved in the assembly of mitochondrial NADH:ubiquinone oxidoreductase complex (complex I) at early stages. May play a role in the biogenesis of complex I subunit MT-ND1. The sequence is that of NADH dehydrogenase (ubiquinone) complex I, assembly factor 6 (Ndufaf6) from Rattus norvegicus (Rat).